Reading from the N-terminus, the 371-residue chain is 4-hydroxy-3-methylbut-2-en-1-yl diphosphate synthase (flavodoxin) (371 aa).

The [4Fe-4S] cluster site is built by Cys-270, Cys-273, Cys-305, and Glu-312.

It belongs to the IspG family. [4Fe-4S] cluster is required as a cofactor.

It carries out the reaction (2E)-4-hydroxy-3-methylbut-2-enyl diphosphate + oxidized [flavodoxin] + H2O + 2 H(+) = 2-C-methyl-D-erythritol 2,4-cyclic diphosphate + reduced [flavodoxin]. It functions in the pathway isoprenoid biosynthesis; isopentenyl diphosphate biosynthesis via DXP pathway; isopentenyl diphosphate from 1-deoxy-D-xylulose 5-phosphate: step 5/6. Its function is as follows. Converts 2C-methyl-D-erythritol 2,4-cyclodiphosphate (ME-2,4cPP) into 1-hydroxy-2-methyl-2-(E)-butenyl 4-diphosphate. The polypeptide is 4-hydroxy-3-methylbut-2-en-1-yl diphosphate synthase (flavodoxin) (Shewanella pealeana (strain ATCC 700345 / ANG-SQ1)).